Consider the following 675-residue polypeptide: Methionine--tRNA ligase (675 aa).

The 'HIGH' region signature appears at 15-25 (PYANGSIHLGH). Zn(2+) contacts are provided by cysteine 146, cysteine 149, cysteine 159, and cysteine 162. The 'KMSKS' region signature appears at 332–336 (KMSKS). Lysine 335 lines the ATP pocket. In terms of domain architecture, tRNA-binding spans 573–675 (DFAKIDMRIA…SGAKPGHQVK (103 aa)).

Belongs to the class-I aminoacyl-tRNA synthetase family. MetG type 1 subfamily. Homodimer. It depends on Zn(2+) as a cofactor.

Its subcellular location is the cytoplasm. It catalyses the reaction tRNA(Met) + L-methionine + ATP = L-methionyl-tRNA(Met) + AMP + diphosphate. In terms of biological role, is required not only for elongation of protein synthesis but also for the initiation of all mRNA translation through initiator tRNA(fMet) aminoacylation. The polypeptide is Methionine--tRNA ligase (Proteus mirabilis (strain HI4320)).